The chain runs to 557 residues: Dihydroxy-acid dehydratase (557 aa).

Asp78 is a Mg(2+) binding site. Cys119 contacts [2Fe-2S] cluster. Mg(2+)-binding residues include Asp120 and Lys121. The residue at position 121 (Lys121) is an N6-carboxylysine. Cys192 contributes to the [2Fe-2S] cluster binding site. Mg(2+) is bound at residue Glu442. The active-site Proton acceptor is Ser468.

It belongs to the IlvD/Edd family. As to quaternary structure, homodimer. [2Fe-2S] cluster serves as cofactor. It depends on Mg(2+) as a cofactor.

The catalysed reaction is (2R)-2,3-dihydroxy-3-methylbutanoate = 3-methyl-2-oxobutanoate + H2O. The enzyme catalyses (2R,3R)-2,3-dihydroxy-3-methylpentanoate = (S)-3-methyl-2-oxopentanoate + H2O. It functions in the pathway amino-acid biosynthesis; L-isoleucine biosynthesis; L-isoleucine from 2-oxobutanoate: step 3/4. The protein operates within amino-acid biosynthesis; L-valine biosynthesis; L-valine from pyruvate: step 3/4. Functionally, functions in the biosynthesis of branched-chain amino acids. Catalyzes the dehydration of (2R,3R)-2,3-dihydroxy-3-methylpentanoate (2,3-dihydroxy-3-methylvalerate) into 2-oxo-3-methylpentanoate (2-oxo-3-methylvalerate) and of (2R)-2,3-dihydroxy-3-methylbutanoate (2,3-dihydroxyisovalerate) into 2-oxo-3-methylbutanoate (2-oxoisovalerate), the penultimate precursor to L-isoleucine and L-valine, respectively. The chain is Dihydroxy-acid dehydratase from Bacillus cytotoxicus (strain DSM 22905 / CIP 110041 / 391-98 / NVH 391-98).